We begin with the raw amino-acid sequence, 188 residues long: Adenine phosphoribosyltransferase (188 aa).

This sequence belongs to the purine/pyrimidine phosphoribosyltransferase family. Homodimer.

The protein localises to the cytoplasm. It carries out the reaction AMP + diphosphate = 5-phospho-alpha-D-ribose 1-diphosphate + adenine. Its pathway is purine metabolism; AMP biosynthesis via salvage pathway; AMP from adenine: step 1/1. Catalyzes a salvage reaction resulting in the formation of AMP, that is energically less costly than de novo synthesis. This is Adenine phosphoribosyltransferase from Paraburkholderia phymatum (strain DSM 17167 / CIP 108236 / LMG 21445 / STM815) (Burkholderia phymatum).